The chain runs to 433 residues: 26S proteasome regulatory subunit 7 (433 aa).

Positions 1–22 (MPDYLGADQRKTKEDEKDDKPI) are disordered. Residues 8-22 (DQRKTKEDEKDDKPI) are compositionally biased toward basic and acidic residues. An N6-acetyllysine modification is found at K116. 216 to 223 (GPPGTGKT) provides a ligand contact to ATP. The residue at position 422 (K422) is an N6-acetyllysine.

This sequence belongs to the AAA ATPase family. In terms of assembly, component of the 19S proteasome regulatory particle complex. The 26S proteasome consists of a 20S core particle (CP) and two 19S regulatory subunits (RP). The regulatory particle is made of a lid composed of 9 subunits, a base containing 6 ATPases including PSMC2 and few additional components. Interacts with NDC80/HEC; this interaction is detected only during M phase. Interacts and SQSTM1. Interacts with PAAF1. Directly interacts with TRIM5. Post-translationally, monoubiquitinated by RNF181. In terms of processing, phosphorylated. Dephosphorylated by UBLCP1 which impairs PSMC2 ATPase activity and disrupts 26S proteasome assembly.

Its subcellular location is the cytoplasm. The protein localises to the nucleus. Component of the 26S proteasome, a multiprotein complex involved in the ATP-dependent degradation of ubiquitinated proteins. This complex plays a key role in the maintenance of protein homeostasis by removing misfolded or damaged proteins, which could impair cellular functions, and by removing proteins whose functions are no longer required. Therefore, the proteasome participates in numerous cellular processes, including cell cycle progression, apoptosis, or DNA damage repair. PSMC2 belongs to the heterohexameric ring of AAA (ATPases associated with diverse cellular activities) proteins that unfolds ubiquitinated target proteins that are concurrently translocated into a proteolytic chamber and degraded into peptides. The polypeptide is 26S proteasome regulatory subunit 7 (PSMC2) (Bos taurus (Bovine)).